Here is a 245-residue protein sequence, read N- to C-terminus: Purine nucleoside phosphorylase (245 aa).

A purine D-ribonucleoside is bound at residue His7. Residues 23-27, Arg45, and 88-91 contribute to the phosphate site; these read GDPGR and RAGS. 183-184 is an a purine D-ribonucleoside binding site; that stretch reads ME. Asp206 acts as the Proton donor in catalysis.

Belongs to the PNP/MTAP phosphorylase family. As to quaternary structure, homohexamer; trimer of homodimers.

The enzyme catalyses inosine + phosphate = alpha-D-ribose 1-phosphate + hypoxanthine. It carries out the reaction guanosine + phosphate = alpha-D-ribose 1-phosphate + guanine. The catalysed reaction is 2'-deoxyguanosine + phosphate = 2-deoxy-alpha-D-ribose 1-phosphate + guanine. It catalyses the reaction 2'-deoxyinosine + phosphate = 2-deoxy-alpha-D-ribose 1-phosphate + hypoxanthine. The enzyme catalyses S-methyl-5'-thioinosine + phosphate = 5-(methylsulfanyl)-alpha-D-ribose 1-phosphate + hypoxanthine. It functions in the pathway purine metabolism; purine nucleoside salvage. With respect to regulation, inhibited by Immucillin-H and 5'-methylthio-Immucillin-H. Inhibited by 5'-deaza-1'-aza-2c-deoxy-1'-(9-methylene)-Immucilin-G (DADMe-ImmG). Functionally, as part of the purine salvage pathway, catalyzes the phosphorolytic breakdown of the N-glycosidic bond in the beta-(deoxy)ribonucleoside molecules, with the formation of the corresponding free purine bases and pentose-1-phosphate. Preferentially acts on inosine and guanosine, and to a lesser extent on 2'-deoxyguanosine and guanosine. Also catalyzes the phosphorylation of S-methyl-5'-thioinosine (MTI) to hypoxanthine; MTI is produced by adenosine deaminase (ADA)-mediated breakdown of S-methyl-5'-thioadenosine (MTA), a major by-product of polyamine biosynthesis. Generates hypoxanthine from both the purine salvage pathway and from polyamine metabolism which is required for nucleic acids synthesis. Has no activity towards adenosine. In Plasmodium falciparum (isolate 3D7), this protein is Purine nucleoside phosphorylase.